Reading from the N-terminus, the 295-residue chain is Sulfotransferase 1A1 (295 aa).

A 3'-phosphoadenylyl sulfate-binding site is contributed by 48-53 (KSGTTW). 106–108 (KTH) serves as a coordination point for substrate. The Proton acceptor role is filled by His-108. 3'-phosphoadenylyl sulfate contacts are provided by residues Arg-130, Ser-138, Tyr-193, 227 to 232 (TSFKEM), and 255 to 259 (FMRKG). Position 138 is a phosphoserine (Ser-138).

This sequence belongs to the sulfotransferase 1 family. In terms of assembly, homodimer. In terms of tissue distribution, liver, lung, adrenal, brain, platelets and skin.

The protein resides in the cytoplasm. It catalyses the reaction a phenol + 3'-phosphoadenylyl sulfate = an aryl sulfate + adenosine 3',5'-bisphosphate + H(+). The catalysed reaction is 17beta-estradiol + 3'-phosphoadenylyl sulfate = 17beta-estradiol 3-sulfate + adenosine 3',5'-bisphosphate + H(+). It carries out the reaction 4-ethylphenol + 3'-phosphoadenylyl sulfate = 4-ethylphenyl sulfate + adenosine 3',5'-bisphosphate + H(+). The enzyme catalyses 4-nitrophenol + 3'-phosphoadenylyl sulfate = 4-nitrophenyl sulfate + adenosine 3',5'-bisphosphate. It catalyses the reaction dopamine + 3'-phosphoadenylyl sulfate = dopamine 3-O-sulfate + adenosine 3',5'-bisphosphate + H(+). The catalysed reaction is dopamine + 3'-phosphoadenylyl sulfate = dopamine 4-O-sulfate + adenosine 3',5'-bisphosphate + H(+). It carries out the reaction 3,3',5-triiodo-L-thyronine + 3'-phosphoadenylyl sulfate = 3,3',5-triiodo-L-thyronine sulfate + adenosine 3',5'-bisphosphate + H(+). The enzyme catalyses 3,3',5'-triiodo-L-thyronine + 3'-phosphoadenylyl sulfate = 3,3',5'-triiodo-L-thyronine sulfate + adenosine 3',5'-bisphosphate + H(+). It catalyses the reaction 3,3'-diiodo-L-thyronine + 3'-phosphoadenylyl sulfate = 3,3'-diiodo-L-thyronine sulfate + adenosine 3',5'-bisphosphate + H(+). The catalysed reaction is L-thyroxine + 3'-phosphoadenylyl sulfate = L-thyroxine sulfate + adenosine 3',5'-bisphosphate + H(+). Its function is as follows. Sulfotransferase that utilizes 3'-phospho-5'-adenylyl sulfate (PAPS) as sulfonate donor to catalyze the sulfate conjugation of a wide variety of acceptor molecules bearing a hydroxyl or an amine group. Sulfonation increases the water solubility of most compounds, and therefore their renal excretion, but it can also result in bioactivation to form active metabolites. Displays broad substrate specificity for small phenolic compounds. Plays an important role in the sulfonation of endogenous molecules such as steroid hormones. Mediates the sulfate conjugation of a variety of xenobiotics, including the drugs acetaminophen and minoxidil. Mediates also the metabolic activation of carcinogenic N-hydroxyarylamines leading to highly reactive intermediates capable of forming DNA adducts, potentially resulting in mutagenesis. May play a role in gut microbiota-host metabolic interaction. O-sulfonates 4-ethylphenol (4-EP), a dietary tyrosine-derived metabolite produced by gut bacteria. The product 4-EPS crosses the blood-brain barrier and may negatively regulate oligodendrocyte maturation and myelination, affecting the functional connectivity of different brain regions associated with the limbic system. Catalyzes the sulfate conjugation of dopamine. Catalyzes the sulfation of T4 (L-thyroxine/3,5,3',5'-tetraiodothyronine), T3 (3,5,3'-triiodothyronine), rT3 (3,3',5'-triiodothyronine) and 3,3'-T2 (3,3'-diiodothyronine), with a substrate preference of 3,3'-T2 &gt; rT3 &gt; T3 &gt; T4. The protein is Sulfotransferase 1A1 (SULT1A1) of Homo sapiens (Human).